The following is a 496-amino-acid chain: Glycerol kinase (496 aa).

An ADP-binding site is contributed by Thr12. Thr12, Thr13, and Ser14 together coordinate ATP. A sn-glycerol 3-phosphate-binding site is contributed by Thr12. An ADP-binding site is contributed by Arg16. Residues Arg82, Glu83, and Tyr134 each contribute to the sn-glycerol 3-phosphate site. Glycerol-binding residues include Arg82, Glu83, and Tyr134. His230 carries the post-translational modification Phosphohistidine; by HPr. Residue Asp244 coordinates sn-glycerol 3-phosphate. Glycerol-binding residues include Asp244 and Gln245. Residues Thr266 and Gly309 each coordinate ADP. 4 residues coordinate ATP: Thr266, Gly309, Gln313, and Gly410. The ADP site is built by Gly410 and Asn414.

This sequence belongs to the FGGY kinase family. As to quaternary structure, homotetramer and homodimer (in equilibrium). In terms of processing, the phosphoenolpyruvate-dependent sugar phosphotransferase system (PTS), including enzyme I, and histidine-containing protein (HPr) are required for the phosphorylation, which leads to the activation of the enzyme.

It carries out the reaction glycerol + ATP = sn-glycerol 3-phosphate + ADP + H(+). It functions in the pathway polyol metabolism; glycerol degradation via glycerol kinase pathway; sn-glycerol 3-phosphate from glycerol: step 1/1. Activated by phosphorylation and inhibited by fructose 1,6-bisphosphate (FBP). In terms of biological role, key enzyme in the regulation of glycerol uptake and metabolism. Catalyzes the phosphorylation of glycerol to yield sn-glycerol 3-phosphate. The sequence is that of Glycerol kinase from Bacillus mycoides (strain KBAB4) (Bacillus weihenstephanensis).